A 262-amino-acid polypeptide reads, in one-letter code: Acyl-[acyl-carrier-protein]--UDP-N-acetylglucosamine O-acyltransferase (262 aa).

Belongs to the transferase hexapeptide repeat family. LpxA subfamily. Homotrimer.

Its subcellular location is the cytoplasm. The enzyme catalyses a (3R)-hydroxyacyl-[ACP] + UDP-N-acetyl-alpha-D-glucosamine = a UDP-3-O-[(3R)-3-hydroxyacyl]-N-acetyl-alpha-D-glucosamine + holo-[ACP]. It participates in glycolipid biosynthesis; lipid IV(A) biosynthesis; lipid IV(A) from (3R)-3-hydroxytetradecanoyl-[acyl-carrier-protein] and UDP-N-acetyl-alpha-D-glucosamine: step 1/6. Functionally, involved in the biosynthesis of lipid A, a phosphorylated glycolipid that anchors the lipopolysaccharide to the outer membrane of the cell. In Haemophilus influenzae (strain PittEE), this protein is Acyl-[acyl-carrier-protein]--UDP-N-acetylglucosamine O-acyltransferase.